The sequence spans 259 residues: UPF0246 protein PSPPH_1119 (259 aa).

It belongs to the UPF0246 family.

This Pseudomonas savastanoi pv. phaseolicola (strain 1448A / Race 6) (Pseudomonas syringae pv. phaseolicola (strain 1448A / Race 6)) protein is UPF0246 protein PSPPH_1119.